We begin with the raw amino-acid sequence, 124 residues long: Small ribosomal subunit protein uS12 (124 aa).

A disordered region spans residues 1–24 (MPTINQLVRRPRKPSVSANKAPAL). Asp-90 is subject to 3-methylthioaspartic acid.

Belongs to the universal ribosomal protein uS12 family. In terms of assembly, part of the 30S ribosomal subunit. Contacts proteins S8 and S17. May interact with IF1 in the 30S initiation complex.

In terms of biological role, with S4 and S5 plays an important role in translational accuracy. Interacts with and stabilizes bases of the 16S rRNA that are involved in tRNA selection in the A site and with the mRNA backbone. Located at the interface of the 30S and 50S subunits, it traverses the body of the 30S subunit contacting proteins on the other side and probably holding the rRNA structure together. The combined cluster of proteins S8, S12 and S17 appears to hold together the shoulder and platform of the 30S subunit. In Anaplasma phagocytophilum (strain HZ), this protein is Small ribosomal subunit protein uS12.